We begin with the raw amino-acid sequence, 434 residues long: Glutamyl-tRNA reductase (434 aa).

Residues Thr-49–Arg-52, Ser-109, Glu-114–Gln-116, and Gln-120 each bind substrate. The Nucleophile role is filled by Cys-50. Gly-189–Cys-194 lines the NADP(+) pocket.

Belongs to the glutamyl-tRNA reductase family. In terms of assembly, homodimer.

It carries out the reaction (S)-4-amino-5-oxopentanoate + tRNA(Glu) + NADP(+) = L-glutamyl-tRNA(Glu) + NADPH + H(+). The protein operates within porphyrin-containing compound metabolism; protoporphyrin-IX biosynthesis; 5-aminolevulinate from L-glutamyl-tRNA(Glu): step 1/2. Catalyzes the NADPH-dependent reduction of glutamyl-tRNA(Glu) to glutamate 1-semialdehyde (GSA). In Geobacter sulfurreducens (strain ATCC 51573 / DSM 12127 / PCA), this protein is Glutamyl-tRNA reductase.